Here is a 359-residue protein sequence, read N- to C-terminus: MDKPHTQIMSIWLIVSTLLLLLMIVVGGITRLTNAGLSIVEWNPVSGIIPPISSEDWNNEFNKYTASPEFKLINNQITISEFKYIFFIEYIHRLLGRITGIIIIIPFLIFCYLKSLTKLQYYRLLLITCLVVIQGFMGWYMVKSGLKETPYINHCRLAGHLLLAVIIYHQLIAELLIIIQPFKCYTLATSKANNSNSTSINVINLKIKLIIFNKIIIFLLYTQIMFGALVAGLDAGLIYNEFPNMGDSLIPIEILNQSIDFTMFDNQVLMQFIHRWFGILISGLIICYAIWLIILNKHALRGMGMVAACLVLVQVTTGIITLLYHVPILAALTHQVGAILILTTFLFIQNIVTNFELLH.

The next 5 membrane-spanning stretches (helical) occupy residues 8-28 (IMSIWLIVSTLLLLLMIVVGG), 94-114 (LLGRITGIIIIIPFLIFCYLK), 124-144 (LLLITCLVVIQGFMGWYMVKS), 159-179 (GHLLLAVIIYHQLIAELLIII), and 215-235 (IIIFLLYTQIMFGALVAGLDA). H274 contributes to the heme binding site. A run of 3 helical transmembrane segments spans residues 276-296 (WFGILISGLIICYAIWLIILN), 303-323 (MGMVAACLVLVQVTTGIITLL), and 328-348 (ILAALTHQVGAILILTTFLFI). H334 contacts heme.

This sequence belongs to the COX15/CtaA family. Type 2 subfamily. In terms of assembly, interacts with CtaB. Heme b is required as a cofactor.

It is found in the cell membrane. It catalyses the reaction Fe(II)-heme o + 2 A + H2O = Fe(II)-heme a + 2 AH2. Its pathway is porphyrin-containing compound metabolism; heme A biosynthesis; heme A from heme O: step 1/1. Its function is as follows. Catalyzes the conversion of heme O to heme A by two successive hydroxylations of the methyl group at C8. The first hydroxylation forms heme I, the second hydroxylation results in an unstable dihydroxymethyl group, which spontaneously dehydrates, resulting in the formyl group of heme A. The polypeptide is Heme A synthase (Orientia tsutsugamushi (strain Boryong) (Rickettsia tsutsugamushi)).